The sequence spans 194 residues: 21 kDa hemolysin (194 aa).

The N-terminal stretch at 1-19 (MRTRSRSTVRPLWPPPSPA) is a signal peptide. 2 BON domains span residues 49 to 118 (DDEV…RTGE) and 127 to 194 (IDSW…NYVQ).

It is found in the periplasm. The polypeptide is 21 kDa hemolysin (hly) (Actinobacillus pleuropneumoniae (Haemophilus pleuropneumoniae)).